Consider the following 121-residue polypeptide: Small ribosomal subunit protein uS13 (121 aa).

Residues 91–121 (HRRGLPVRGQNSKNNARTRKGPRRTVANKKK) are disordered. The segment covering 106 to 121 (ARTRKGPRRTVANKKK) has biased composition (basic residues).

It belongs to the universal ribosomal protein uS13 family. As to quaternary structure, part of the 30S ribosomal subunit. Forms a loose heterodimer with protein S19. Forms two bridges to the 50S subunit in the 70S ribosome.

Its function is as follows. Located at the top of the head of the 30S subunit, it contacts several helices of the 16S rRNA. In the 70S ribosome it contacts the 23S rRNA (bridge B1a) and protein L5 of the 50S subunit (bridge B1b), connecting the 2 subunits; these bridges are implicated in subunit movement. Contacts the tRNAs in the A and P-sites. This Bacillus cereus (strain AH187) protein is Small ribosomal subunit protein uS13.